Reading from the N-terminus, the 335-residue chain is Nucleoid-associated protein PP_0973 (335 aa).

It belongs to the YejK family.

It localises to the cytoplasm. The protein localises to the nucleoid. This chain is Nucleoid-associated protein PP_0973, found in Pseudomonas putida (strain ATCC 47054 / DSM 6125 / CFBP 8728 / NCIMB 11950 / KT2440).